Reading from the N-terminus, the 374-residue chain is D-amino-acid oxidase 3 (374 aa).

The first 19 residues, 1–19 (MVKYDAIILGSGVLGLSIA), serve as a signal peptide directing secretion. 7 residues coordinate FAD: S11, L14, K34, D35, A46, S47, and G51. N-linked (GlcNAc...) asparagine glycosylation occurs at N180. A disulfide bond links C214 and C271. (R)-lactate contacts are provided by Y229, Y246, and R296. Residues Y229, Y246, and R296 each coordinate anthranilate. Residues R296, G342, G345, Y346, and Q347 each coordinate FAD. A Microbody targeting signal motif is present at residues 372–374 (AKL).

The protein belongs to the DAMOX/DASOX family. It depends on FAD as a cofactor.

The protein localises to the peroxisome matrix. The enzyme catalyses a D-alpha-amino acid + O2 + H2O = a 2-oxocarboxylate + H2O2 + NH4(+). In terms of biological role, catalyzes the oxidative deamination of D-amino acids with broad substrate specificity. Enables the organism to utilize D-amino acids as a source of nutrients. Enables the organism to utilize D-asparate and D-glutamate as a nitrogen source and may also contribute to utlization of D-tryptophan, D-tyrosine and D-asparagine as a nitrogen source. Protects the organism from the toxicity of D-amino acids, including from D-glutamate. May play a role in its interaction with the host. This is D-amino-acid oxidase 3 from Cryptococcus deuterogattii (strain R265) (Cryptococcus gattii VGII (strain R265)).